A 218-amino-acid polypeptide reads, in one-letter code: N-(5'-phosphoribosyl)anthranilate isomerase (218 aa).

The protein belongs to the TrpF family.

It carries out the reaction N-(5-phospho-beta-D-ribosyl)anthranilate = 1-(2-carboxyphenylamino)-1-deoxy-D-ribulose 5-phosphate. The protein operates within amino-acid biosynthesis; L-tryptophan biosynthesis; L-tryptophan from chorismate: step 3/5. The chain is N-(5'-phosphoribosyl)anthranilate isomerase from Bordetella parapertussis (strain 12822 / ATCC BAA-587 / NCTC 13253).